A 411-amino-acid polypeptide reads, in one-letter code: Alpha-1-antiproteinase (411 aa).

Positions 1 to 24 are cleaved as a signal peptide; it reads MAPSISRGLLLLAALCCLAPSFLA. Serine 33 carries the post-translational modification Phosphoserine. Residues asparagine 64, asparagine 101, and asparagine 265 are each glycosylated (N-linked (GlcNAc...) asparagine). The RCL stretch occupies residues 367 to 386; it reads GATVVEAVPMSLPPQVKFDH. Residue serine 377 is modified to Phosphoserine.

The protein belongs to the serpin family. As to quaternary structure, interacts with CELA2A. Interacts with ERGIC3 and LMAN1/ERGIC53. Interacts with PRSS1/Trypsin. As to expression, plasma.

It is found in the secreted. Its function is as follows. Inhibitor of serine proteases. The primary target is elastase, but also has a moderate affinity for plasmin and thrombin. This Rattus norvegicus (Rat) protein is Alpha-1-antiproteinase (Serpina1).